The sequence spans 303 residues: Aspartate carbamoyltransferase catalytic subunit (303 aa).

Residues Arg51 and Thr52 each contribute to the carbamoyl phosphate site. Lys80 provides a ligand contact to L-aspartate. Arg101, His129, and Gln132 together coordinate carbamoyl phosphate. L-aspartate-binding residues include Arg162 and Arg221. 2 residues coordinate carbamoyl phosphate: Leu260 and Pro261.

The protein belongs to the aspartate/ornithine carbamoyltransferase superfamily. ATCase family. As to quaternary structure, heterooligomer of catalytic and regulatory chains.

The catalysed reaction is carbamoyl phosphate + L-aspartate = N-carbamoyl-L-aspartate + phosphate + H(+). The protein operates within pyrimidine metabolism; UMP biosynthesis via de novo pathway; (S)-dihydroorotate from bicarbonate: step 2/3. Functionally, catalyzes the condensation of carbamoyl phosphate and aspartate to form carbamoyl aspartate and inorganic phosphate, the committed step in the de novo pyrimidine nucleotide biosynthesis pathway. The sequence is that of Aspartate carbamoyltransferase catalytic subunit from Saccharolobus islandicus (strain Y.N.15.51 / Yellowstone #2) (Sulfolobus islandicus).